We begin with the raw amino-acid sequence, 172 residues long: Adenine phosphoribosyltransferase (172 aa).

Belongs to the purine/pyrimidine phosphoribosyltransferase family. Homodimer.

Its subcellular location is the cytoplasm. The enzyme catalyses AMP + diphosphate = 5-phospho-alpha-D-ribose 1-diphosphate + adenine. The protein operates within purine metabolism; AMP biosynthesis via salvage pathway; AMP from adenine: step 1/1. Functionally, catalyzes a salvage reaction resulting in the formation of AMP, that is energically less costly than de novo synthesis. This Clostridium botulinum (strain Loch Maree / Type A3) protein is Adenine phosphoribosyltransferase.